A 281-amino-acid chain; its full sequence is TIP41-like protein (281 aa).

This sequence belongs to the TIP41 family.

The polypeptide is TIP41-like protein (Caenorhabditis elegans).